Here is a 434-residue protein sequence, read N- to C-terminus: Glutamate-1-semialdehyde 2,1-aminomutase 1 (434 aa).

Residue Lys-270 is modified to N6-(pyridoxal phosphate)lysine.

It belongs to the class-III pyridoxal-phosphate-dependent aminotransferase family. HemL subfamily. Homodimer. The cofactor is pyridoxal 5'-phosphate.

It is found in the cytoplasm. The enzyme catalyses (S)-4-amino-5-oxopentanoate = 5-aminolevulinate. Its pathway is porphyrin-containing compound metabolism; protoporphyrin-IX biosynthesis; 5-aminolevulinate from L-glutamyl-tRNA(Glu): step 2/2. The chain is Glutamate-1-semialdehyde 2,1-aminomutase 1 from Bacillus anthracis (strain CDC 684 / NRRL 3495).